The following is a 788-amino-acid chain: MNANALRVLEYDKLKELLAKQTASSLGAQFVRKMEPAEDFEQVKALLALTTEATTVYRLRDRYPFGGLTDVRSEVKRAEIGSVLSTSELLAVADVVYSGRQVKAFQERLHEDHPDLRLPALDSRIEQITKLVEIEQGIRHAIDDQGTVQDSASDKLRALRSQLRSLEGQVRSKIDGVLRNKSKMLSDAIVTMRNDRYCVPVKQEYRQAFGGIVHDQSASGATLFIEPQAVVAANNEIQEARLKERAEIERILAQLSALVGSVGDSLRINVDVLAELDFIMAKALYGHTIRAVEPRLNENRHIVLKEARHPFIPDDEVVPITVSLGGEFTSLVITGPNTGGKTVTLKTIGLLQLMVQSGLYVPAADETELSVFDAIYADIGDEQSIEQNLSTFSSHMTNIVSMMGKIDFMSLVLFDELGAGTDPTEGAALAIAILDEVKRRGARVAATTHYSELKAYGYNREGVVNASMEFDVESLSPTYRLLIGVPGRSNAFEISKRLGLEDRVIDAARDQVGTDAQSVETMIGRLEEAKQRAESLERELLQEQQRLVEEREEFEREQAEIHQEKNEILAKAEEKATRAVERAQKEAEAVIKRLKELRDAGAVKEHELIEARKQLEQAKPSLQDQRIAKVKAKTNQAPVFAKGEEVKVTTFNQKGYIINQNSNGEYTVQVGIMKVNVKPSDLAKVGEVKSASKTKKRSGGTSITKQSAASAELDLRGVRVEEGLAKLDRFMDQALLSNYEQIRVIHGLGTGAMRQGVQEYLRGNRHVKTHRLGGQGEGGHGVTIIELK.

335–342 (GPNTGGKT) is a binding site for ATP. The disordered stretch occupies residues 688-708 (VKSASKTKKRSGGTSITKQSA). Positions 699–708 (GGTSITKQSA) are enriched in polar residues. A Smr domain is found at 713-788 (LDLRGVRVEE…GHGVTIIELK (76 aa)).

Belongs to the DNA mismatch repair MutS family. MutS2 subfamily. In terms of assembly, homodimer. Binds to stalled ribosomes, contacting rRNA.

Its function is as follows. Endonuclease that is involved in the suppression of homologous recombination and thus may have a key role in the control of bacterial genetic diversity. In terms of biological role, acts as a ribosome collision sensor, splitting the ribosome into its 2 subunits. Detects stalled/collided 70S ribosomes which it binds and splits by an ATP-hydrolysis driven conformational change. Acts upstream of the ribosome quality control system (RQC), a ribosome-associated complex that mediates the extraction of incompletely synthesized nascent chains from stalled ribosomes and their subsequent degradation. Probably generates substrates for RQC. In Exiguobacterium sibiricum (strain DSM 17290 / CCUG 55495 / CIP 109462 / JCM 13490 / 255-15), this protein is Endonuclease MutS2.